Here is a 379-residue protein sequence, read N- to C-terminus: Class V chitinase CHIT5b (379 aa).

The signal sequence occupies residues 1 to 26 (MANILNLKHLLTLALILLALATKSST). Residues 34 to 379 (RVKGIYWLEN…TQASKAWKLV (346 aa)) form the GH18 domain. Asn68, Asn109, and Asn128 each carry an N-linked (GlcNAc...) asparagine glycan. The Proton donor role is filled by Glu147. Asn192, Asn227, and Asn241 each carry an N-linked (GlcNAc...) asparagine glycan.

It belongs to the glycosyl hydrolase 18 family. Chitinase class V subfamily.

It catalyses the reaction Random endo-hydrolysis of N-acetyl-beta-D-glucosaminide (1-&gt;4)-beta-linkages in chitin and chitodextrins.. It functions in the pathway glycan degradation; chitin degradation. In terms of biological role, possesses chitinase activity in vitro toward glycol chitin, carboxymethyl-chitin, colloidal chitin, and the chitin oligosaccharides (N-acetylglucosamine) (GlcNAc)6 and (GlcNAc)5. Hydrolyzes (GlcNAc)6 into (GlcNAc)4 and (GlcNAc)2, or two (GlcNAc)3 molecules. Has the capacity to reduce hyphal growth of the fungus Trichoderma viride in an agar-plate bioassay. The sequence is that of Class V chitinase CHIT5b from Medicago truncatula (Barrel medic).